We begin with the raw amino-acid sequence, 1122 residues long: RecBCD enzyme subunit RecC (1122 aa).

It belongs to the RecC family. As to quaternary structure, heterotrimer of RecB, RecC and RecD. All subunits contribute to DNA-binding. Interacts with YgbT (Cas1). In terms of assembly, (Microbial infection) Lambda virus GamS protein interacts with the enzyme without displacing any of the subunits.

With respect to regulation, after reacting with DNA bearing a Chi site the holoenzyme is disassembled and loses exonuclease activity, DNA unwinding and Chi-directed DNA cleavage; RecB remains complexed with ssDNA, which may prevent holoenzyme reassembly. High levels of Mg(2+) (13 mM MgCl(2+)) or incubation with DNase allow holoenzyme reassembly, suggesting it is DNA bound to RecB that prevents reassembly. (Microbial infection) RecBCD is inhibited by the lambda virus gam protein (both GamL and GamS isoforms); in vitro a short preincubation prior to adding DNA results in maximal inhibition. In terms of biological role, a helicase/nuclease that prepares dsDNA breaks (DSB) for recombinational DNA repair. Binds to DSBs and unwinds DNA via a rapid (&gt;1 kb/second) and highly processive (&gt;30 kb) ATP-dependent bidirectional helicase. Unwinds dsDNA until it encounters a Chi (crossover hotspot instigator, 5'-GCTGGTGG-3') sequence from the 3' direction. Cuts ssDNA a few nucleotides 3' to Chi site, by nicking one strand or switching the strand degraded (depending on the reaction conditions). The properties and activities of the enzyme are changed at Chi. The Chi-altered holoenzyme produces a long 3'-ssDNA overhang which facilitates RecA-binding to the ssDNA for homologous DNA recombination and repair. Holoenzyme degrades any linearized DNA that is unable to undergo homologous recombination. In the holoenzyme this subunit almost certainly recognizes the wild-type Chi sequence, when added to isolated RecB increases its ATP-dependent helicase processivity. The RecBC complex requires the RecD subunit for nuclease activity, but can translocate along ssDNA in both directions. The RecBCD complex does not unwind G-quadruplex DNA. This chain is RecBCD enzyme subunit RecC, found in Escherichia coli (strain K12).